The chain runs to 214 residues: C-type lectin domain family 2 member L (214 aa).

Positions 1–56 (MEPAREPPSRARPPPPLAARPAPAPAAPRPRSPAEAEARGPEGLLRRSGSGYEGST) are disordered. A compositionally biased stretch (pro residues) spans 10–31 (RARPPPPLAARPAPAPAAPRPR). Serine 32 is subject to Phosphoserine. A helical membrane pass occupies residues 69–89 (LLLGAIAVLLFAILVVMSILA). In terms of domain architecture, C-type lectin spans 107–209 (YGRKCYFFSE…CLMTRPWVCS (103 aa)). 2 disulfides stabilise this stretch: cysteine 128-cysteine 208 and cysteine 187-cysteine 200.

The protein resides in the membrane. The sequence is that of C-type lectin domain family 2 member L (CLEC2L) from Homo sapiens (Human).